The sequence spans 273 residues: Ribosomal RNA small subunit methyltransferase A (273 aa).

S-adenosyl-L-methionine-binding residues include asparagine 25, leucine 27, glycine 52, glutamate 73, aspartate 99, and asparagine 118.

It belongs to the class I-like SAM-binding methyltransferase superfamily. rRNA adenine N(6)-methyltransferase family. RsmA subfamily.

It is found in the cytoplasm. It carries out the reaction adenosine(1518)/adenosine(1519) in 16S rRNA + 4 S-adenosyl-L-methionine = N(6)-dimethyladenosine(1518)/N(6)-dimethyladenosine(1519) in 16S rRNA + 4 S-adenosyl-L-homocysteine + 4 H(+). Specifically dimethylates two adjacent adenosines (A1518 and A1519) in the loop of a conserved hairpin near the 3'-end of 16S rRNA in the 30S particle. May play a critical role in biogenesis of 30S subunits. This is Ribosomal RNA small subunit methyltransferase A from Novosphingobium aromaticivorans (strain ATCC 700278 / DSM 12444 / CCUG 56034 / CIP 105152 / NBRC 16084 / F199).